Reading from the N-terminus, the 557-residue chain is MPLDDDLEDNPSLVPPPSTTTTSSNATGDAATMMDEVEEAEDAPTADFRLFASTYSKTKNISAQTIRKGEKDFESHGTRAQASALDASRDAMRDVLSYTRVHNTKSASGWCRGWYFPDWWKDWPEDWEQQKLTKRGKEGAGEDDEEEKDRKLPPLHVRDRVVLLEHTNVASQSLGRAVTGLPKDRPARGREWLLPEEALYLVERGSLDLWWPTKGIEEVFPADGSVPAAAAATTSAKGEGEQRTEEDEEDDDEYKYGLPLSLQAAYALLIGEDGERGKVSLQKFQVFSHLKRAGYNVIRAPTNPLPVQEDTQLTTTTQPASKPISVTEWLISCLPQSKSSPTDPPPYGPLVPPGFYRSYNTIYNYLSLRPSSTSSSASPTADNQPQKPQSPESDESDSGSDSPYKIHYHVYKASTKFTRTRPPPPDFYISVISAKDTSIPTLSEISSLLASAPADLPKAEWLAGGPARLYARLKHGYRNVLLAVNDHGVINYMRFAEGGFAKEELFRNYDMRVSGGPRRGGGGGGKKSGNNNGRGSRGRGGGRGGGRGGRGGRGRGN.

5 disordered regions span residues 1 to 36, 131 to 152, 225 to 252, 370 to 403, and 514 to 557; these read MPLD…MMDE, KLTK…DRKL, SVPA…EDDD, PSST…SDSP, and SGGP…GRGN. Positions 131–140 are enriched in basic and acidic residues; the sequence is KLTKRGKEGA. Positions 370 to 381 are enriched in low complexity; it reads PSSTSSSASPTA. Composition is skewed to gly residues over residues 517 to 527 and 538 to 549; these read PRRGGGGGGKK and GRGGGRGGGRGG.

This sequence belongs to the SEN54 family. As to quaternary structure, tRNA splicing endonuclease is a heterotetramer composed of tsp-2/sen2, tsp-1/sen15, tsp-4/sen34 and tsp-5/sen54. Interacts directly with tsp-2/sen2.

Non-catalytic subunit of the tRNA-splicing endonuclease complex, a complex responsible for identification and cleavage of the splice sites in pre-tRNA. It cleaves pre-tRNA at the 5' and 3' splice sites to release the intron. The products are an intron and two tRNA half-molecules bearing 2',3' cyclic phosphate and 5'-OH termini. There are no conserved sequences at the splice sites, but the intron is invariably located at the same site in the gene, placing the splice sites an invariant distance from the constant structural features of the tRNA body. May be required to embody the molecular ruler of the complex. This chain is Probable tRNA-splicing endonuclease subunit tsp-5 (tsp-5), found in Neurospora crassa (strain ATCC 24698 / 74-OR23-1A / CBS 708.71 / DSM 1257 / FGSC 987).